The sequence spans 471 residues: uncharacterized protein (471 aa).

The next 11 helical transmembrane spans lie at 15-35 (LWGP…TILL), 66-86 (PLQA…IVGV), 89-109 (AIMF…LFAM), 147-167 (WLGV…IMVQ), 179-199 (FSFN…LVVI), 210-230 (EFVV…IVLM), 237-257 (AFFS…GGFA), 303-323 (VIGI…IVLA), 353-373 (GYFV…VVIF), 386-406 (LAGH…AAGG), and 410-430 (IWGV…IALL).

The protein belongs to the alanine or glycine:cation symporter (AGCS) (TC 2.A.25) family.

It is found in the cell membrane. This is an uncharacterized protein from Bacillus subtilis (strain 168).